Consider the following 78-residue polypeptide: Large ribosomal subunit protein bL28 (78 aa).

Residues 1–20 (MSRVCQLTGTRANNGMSVSH) show a composition bias toward polar residues. The segment at 1 to 23 (MSRVCQLTGTRANNGMSVSHSHI) is disordered.

It belongs to the bacterial ribosomal protein bL28 family.

The sequence is that of Large ribosomal subunit protein bL28 from Prochlorococcus marinus (strain NATL2A).